The chain runs to 310 residues: Fructose-bisphosphate aldolase/6-deoxy-5-ketofructose 1-phosphate synthase (310 aa).

Substrate is bound by residues 48 to 49 (DQ), H53, D57, and W180. Catalysis depends on Y182, which acts as the Proton donor. Substrate is bound by residues R184, 213-215 (KVN), 241-243 (AGG), and 270-271 (GR). Residue K213 is the Schiff-base intermediate with dihydroxyacetone-P of the active site. Catalysis depends on K213, which acts as the Schiff-base intermediate with substrate.

The protein belongs to the DeoC/FbaB aldolase family.

The enzyme catalyses beta-D-fructose 1,6-bisphosphate = D-glyceraldehyde 3-phosphate + dihydroxyacetone phosphate. It carries out the reaction beta-D-fructose 1,6-bisphosphate + methylglyoxal = 1-deoxy-D-threo-hexo-2,5-diulose 6-phosphate + D-glyceraldehyde 3-phosphate. It catalyses the reaction beta-D-fructose 1-phosphate + methylglyoxal = 1-deoxy-D-threo-hexo-2,5-diulose 6-phosphate + D-glyceraldehyde. Its pathway is aromatic compound metabolism. Functionally, catalyzes the transaldolization of either fructose-1-P or fructose-1,6-bisphosphate with methylglyoxal to produce 6-deoxy-5-ketofructose-1-phosphate (DKFP). Also catalyzes the reversible aldol condensation of dihydroxyacetone phosphate (DHAP or glycerone-phosphate) with glyceraldehyde 3-phosphate (G3P or GAP) to produce fructose 1,6-bisphosphate (FBP). The sequence is that of Fructose-bisphosphate aldolase/6-deoxy-5-ketofructose 1-phosphate synthase from Methanocaldococcus jannaschii (strain ATCC 43067 / DSM 2661 / JAL-1 / JCM 10045 / NBRC 100440) (Methanococcus jannaschii).